We begin with the raw amino-acid sequence, 204 residues long: Ribonuclease HII (204 aa).

Residues Q17 to D204 enclose the RNase H type-2 domain. A divalent metal cation-binding residues include D23, E24, and D115.

Belongs to the RNase HII family. Mn(2+) serves as cofactor. The cofactor is Mg(2+).

The protein resides in the cytoplasm. It carries out the reaction Endonucleolytic cleavage to 5'-phosphomonoester.. Functionally, endonuclease that specifically degrades the RNA of RNA-DNA hybrids. The sequence is that of Ribonuclease HII from Hahella chejuensis (strain KCTC 2396).